A 541-amino-acid polypeptide reads, in one-letter code: Beta-hexosaminidase 1 (541 aa).

The N-terminal stretch at 1–20 is a signal peptide; sequence MSTNLLRLILLFITLSITSS. Asn44 and Asn304 each carry an N-linked (GlcNAc...) asparagine glycan. A disulfide bridge links Cys295 with Cys337. The active-site Proton donor is Glu332. 3 N-linked (GlcNAc...) asparagine glycosylation sites follow: Asn340, Asn352, and Asn497. Cysteines 511 and 538 form a disulfide.

This sequence belongs to the glycosyl hydrolase 20 family. In terms of processing, N-glycosylated. As to expression, expressed in roots, leaves, stems, flowers and siliques.

It is found in the vacuole. The enzyme catalyses Hydrolysis of terminal non-reducing N-acetyl-D-hexosamine residues in N-acetyl-beta-D-hexosaminides.. Its activity is regulated as follows. Inhibited by N-acetylcastanospermine, 2-acet-amido-1,2-dideoxynojirimycin and PUGNAc. In terms of biological role, has a broad substrate specificity. Can use synthetic substrates such as pyridylaminated chitotriose, pyridylaminated chitobiose, p-nitrophenyl-beta-N-acetylglucosaminide, p-nitrophenyl-2-acetamido-2-deoxy-beta-D-glucopyranoside (pNP-GlcNAc), p-nitrophenyl-2-acetamido-2-deoxy-beta-D-galactopyranoside (pNP-GalNAc), 4-methylumbelliferyl-2-acetamido-2-deoxy-beta-D-glucopyranoside (MU-GlcNAc), and 4-methylumbelliferyl-6-sulfo-2-acetamido-2-deoxy-beta-D-glucopyranoside (MU-GlcNAc-6SO(4)) as substrates. Removes terminal GlcNAc residues from alpha1,3- and alpha1,6-mannosyl branches of biantennary N-glycans without any strict branch preference. Required for the presence of paucimannosidic N-glycans in glycoproteins of roots and, to a lower extent, of leaves. The polypeptide is Beta-hexosaminidase 1 (HEXO1) (Arabidopsis thaliana (Mouse-ear cress)).